A 60-amino-acid polypeptide reads, in one-letter code: Cecropin-B (60 aa).

The signal sequence occupies residues 1-25 (MNFTKLFILVAIAVLVVVGVQPVDG). L59 carries the leucine amide modification.

This sequence belongs to the cecropin family.

The protein localises to the secreted. Cecropins have lytic and antibacterial activity against several Gram-positive and Gram-negative bacteria. This is Cecropin-B (CecB) from Anopheles gambiae (African malaria mosquito).